The chain runs to 88 residues: DNA-directed RNA polymerase subunit omega (88 aa).

This sequence belongs to the RNA polymerase subunit omega family. As to quaternary structure, the RNAP catalytic core consists of 2 alpha, 1 beta, 1 beta' and 1 omega subunit. When a sigma factor is associated with the core the holoenzyme is formed, which can initiate transcription.

It catalyses the reaction RNA(n) + a ribonucleoside 5'-triphosphate = RNA(n+1) + diphosphate. Its function is as follows. Promotes RNA polymerase assembly. Latches the N- and C-terminal regions of the beta' subunit thereby facilitating its interaction with the beta and alpha subunits. This chain is DNA-directed RNA polymerase subunit omega, found in Anaeromyxobacter dehalogenans (strain 2CP-1 / ATCC BAA-258).